The primary structure comprises 1559 residues: Fatty acid synthase alpha subunit stcJ (1559 aa).

The region spanning 68 to 147 is the Carrier domain; sequence DTPLTAIFII…AALGEVSLGP (80 aa). Serine 106 is subject to O-(pantetheine 4'-phosphoryl)serine. A ketoreductase (KR) domain region spans residues 457-693; sequence NHTYLITGAG…SLLLTPQLAT (237 aa). The region spanning 873–1327 is the Ketosynthase family 3 (KS3) domain; that stretch reads REVFQEIVLE…QKEAQLVGVH (455 aa). Cysteine 1058 (for beta-ketoacyl synthase activity) is an active-site residue. Basic and acidic residues predominate over residues 1105–1117; the sequence is VRDEQARGREPGE. The segment at 1105–1125 is disordered; it reads VRDEQARGREPGEMSRPTAAS. Residues histidine 1212 and histidine 1253 each act as for beta-ketoacyl synthase activity in the active site. A Mg(2+)-binding site is contributed by aspartate 1432. Residues 1432–1434, 1480–1490, 1504–1506, and 1532–1534 contribute to the acetyl-CoA site; these read DTV, EAVFKCLQTVS, RVQ, and LSY. Serine 1533 lines the Mg(2+) pocket.

The protein belongs to the thiolase-like superfamily. Fungal fatty acid synthetase subunit alpha family. As to quaternary structure, [Alpha(6)beta(6)] hexamers of two multifunctional subunits (alpha and beta).

It catalyses the reaction acetyl-CoA + n malonyl-CoA + 2n NADPH + 4n H(+) = a long-chain-acyl-CoA + n CoA + n CO2 + 2n NADP(+).. The catalysed reaction is a fatty acyl-[ACP] + malonyl-[ACP] + H(+) = a 3-oxoacyl-[ACP] + holo-[ACP] + CO2. It carries out the reaction a (3R)-hydroxyacyl-[ACP] + NADP(+) = a 3-oxoacyl-[ACP] + NADPH + H(+). The protein operates within mycotoxin biosynthesis; sterigmatocystin biosynthesis. Fatty acid synthase alpha subunit; part of the gene cluster that mediates the biosynthesis of sterigmatocystin (ST), a polyketide-derived furanocoumarin which is part of the most toxic and carcinogenic compounds among the known mycotoxins. The first step in the biosynthesis of sterigmatocystin is the production of hexanoate by the fatty acid synthase (FAS) units stcJ and stcK. The polyketide backbone is assembled by the non-reducing polyketide synthase stcA by condensation of the starter hexanoyl-CoA and 7 malonyl-CoA extender units followed by cyclization and release of norsolorinic acid. Norsolorinic acid is the first stable intermediate in the biosynthesis of sterigmatocystin and is converted into averantin (AVN) by the ketoreductase stcE which reduces the hexanoate ketone to an alcohol. Averantin is then oxidized into 5'-hydroxyaverantin (HAVN) by the cytochrome P450 monooxygenase stcF. 5'-hydroxyaverantin is further converted to 5'-oxyaverantin (OAVN) by the 5'-hydroxyaverantin dehydrogenase stcG. The next step is the conversion of OAVN into averufin (AVF) which is catalyzed by a yet to be identified enzyme. The cytochrome P450 monooxygenase stcB and the flavin-binding monooxygenase stcW are both required for the conversion of averufin to 1-hydroxyversicolorone. The esterase stcI probably catalyzes the formation of versiconal hemiacetal acetate from 1-hydroxyversicolorone. The oxydoreductase stcN then probably catalyzes the biosynthetic step from versiconal to versicolorin B (VERB). The next step is performed by the versicolorin B desaturase stcL to produce versicolorin A (VERA). The ketoreductase stcU and the cytochrome P450 monooxygenase stcS are involved in the conversion of versicolorin A to demethylsterigmatocystin. The Baeyer-Villiger oxidas stcQ and the reductase stcR might be involved in the biosynthetic step from versicolorin A to demethylsterigmatocystin. The final step in the biosynthesis of sterigmatocystin is the methylation of demethylsterigmatocystin catalyzed by the methyltransferase stcP. The polypeptide is Fatty acid synthase alpha subunit stcJ (Emericella nidulans (strain FGSC A4 / ATCC 38163 / CBS 112.46 / NRRL 194 / M139) (Aspergillus nidulans)).